A 595-amino-acid chain; its full sequence is Aspartate--tRNA(Asp/Asn) ligase (595 aa).

Residue Glu177 participates in L-aspartate binding. The segment at 201 to 204 (QQFK) is aspartate. Arg223 contacts L-aspartate. ATP contacts are provided by residues 223-225 (RDE) and Gln232. Residue His455 coordinates L-aspartate. Residue Glu489 participates in ATP binding. Arg496 is an L-aspartate binding site. Position 542–545 (542–545 (GLDR)) interacts with ATP.

Belongs to the class-II aminoacyl-tRNA synthetase family. Type 1 subfamily. In terms of assembly, homodimer.

It is found in the cytoplasm. It catalyses the reaction tRNA(Asx) + L-aspartate + ATP = L-aspartyl-tRNA(Asx) + AMP + diphosphate. Aspartyl-tRNA synthetase with relaxed tRNA specificity since it is able to aspartylate not only its cognate tRNA(Asp) but also tRNA(Asn). Reaction proceeds in two steps: L-aspartate is first activated by ATP to form Asp-AMP and then transferred to the acceptor end of tRNA(Asp/Asn). This chain is Aspartate--tRNA(Asp/Asn) ligase, found in Opitutus terrae (strain DSM 11246 / JCM 15787 / PB90-1).